We begin with the raw amino-acid sequence, 279 residues long: Undecaprenyl-diphosphatase (279 aa).

The next 8 helical transmembrane spans lie at 2–22 (LIIELLKAIFFGIIEGITEWL), 44–64 (AFIEMFNIVIQLGAIIAVMLI), 85–105 (WQLWLKVVIACIPSILIAVPL), 113–133 (FYFMVPIAIALIVYGIAFIWI), 163–183 (VLSIVPGTSRSGATILGAIIL), 188–208 (TVAADFTFFLAIPTMFGYSGL), 223–243 (AQVLILLVASLTAFVVSLLAI), and 255–275 (FTIFGKYRIVLGSLLLIYSFF).

The protein belongs to the UppP family.

Its subcellular location is the cell membrane. It catalyses the reaction di-trans,octa-cis-undecaprenyl diphosphate + H2O = di-trans,octa-cis-undecaprenyl phosphate + phosphate + H(+). Catalyzes the dephosphorylation of undecaprenyl diphosphate (UPP). Confers resistance to bacitracin. The polypeptide is Undecaprenyl-diphosphatase (Streptococcus pyogenes serotype M28 (strain MGAS6180)).